The sequence spans 333 residues: Fe(3+)-citrate import system permease protein YfmD (333 aa).

The next 9 helical transmembrane spans lie at leucine 13 to valine 33, threonine 67 to methionine 87, isoleucine 97 to alanine 117, serine 121 to alanine 141, leucine 151 to isoleucine 171, phenylalanine 201 to leucine 221, isoleucine 238 to isoleucine 258, tyrosine 279 to alanine 299, and isoleucine 302 to phenylalanine 322.

Belongs to the binding-protein-dependent transport system permease family. FecCD subfamily. In terms of assembly, the complex is composed of one ATP-binding protein (YfmF), two transmembrane proteins (YfmD and YfmE) and a solute-binding protein (YfmC).

The protein resides in the cell membrane. Functionally, part of the ABC transporter complex YfmCDEF involved in citrate-dependent Fe(3+) import. Involved in the translocation of the substrate across the membrane. The sequence is that of Fe(3+)-citrate import system permease protein YfmD (yfmD) from Bacillus subtilis (strain 168).